Reading from the N-terminus, the 982-residue chain is Bifunctional glutamine synthetase adenylyltransferase/adenylyl-removing enzyme (982 aa).

Residues methionine 1–aspartate 460 are adenylyl removase. Residues glycine 473–glycine 982 are adenylyl transferase.

The protein belongs to the GlnE family. Requires Mg(2+) as cofactor.

The enzyme catalyses [glutamine synthetase]-O(4)-(5'-adenylyl)-L-tyrosine + phosphate = [glutamine synthetase]-L-tyrosine + ADP. It catalyses the reaction [glutamine synthetase]-L-tyrosine + ATP = [glutamine synthetase]-O(4)-(5'-adenylyl)-L-tyrosine + diphosphate. Its function is as follows. Involved in the regulation of glutamine synthetase GlnA, a key enzyme in the process to assimilate ammonia. When cellular nitrogen levels are high, the C-terminal adenylyl transferase (AT) inactivates GlnA by covalent transfer of an adenylyl group from ATP to specific tyrosine residue of GlnA, thus reducing its activity. Conversely, when nitrogen levels are low, the N-terminal adenylyl removase (AR) activates GlnA by removing the adenylyl group by phosphorolysis, increasing its activity. The regulatory region of GlnE binds the signal transduction protein PII (GlnB) which indicates the nitrogen status of the cell. In Pseudomonas aeruginosa (strain ATCC 15692 / DSM 22644 / CIP 104116 / JCM 14847 / LMG 12228 / 1C / PRS 101 / PAO1), this protein is Bifunctional glutamine synthetase adenylyltransferase/adenylyl-removing enzyme.